We begin with the raw amino-acid sequence, 477 residues long: Glutamyl-tRNA reductase (477 aa).

Substrate contacts are provided by residues 49-52 (TCNR), serine 109, 114-116 (EGQ), and glutamine 120. Cysteine 50 (nucleophile) is an active-site residue. 221 to 226 (GAGSMS) is an NADP(+) binding site.

Belongs to the glutamyl-tRNA reductase family. Homodimer.

The catalysed reaction is (S)-4-amino-5-oxopentanoate + tRNA(Glu) + NADP(+) = L-glutamyl-tRNA(Glu) + NADPH + H(+). It participates in porphyrin-containing compound metabolism; protoporphyrin-IX biosynthesis; 5-aminolevulinate from L-glutamyl-tRNA(Glu): step 1/2. Its function is as follows. Catalyzes the NADPH-dependent reduction of glutamyl-tRNA(Glu) to glutamate 1-semialdehyde (GSA). In Thermobifida fusca (strain YX), this protein is Glutamyl-tRNA reductase.